We begin with the raw amino-acid sequence, 944 residues long: Isoleucine--tRNA ligase (944 aa).

Positions 58–68 match the 'HIGH' region motif; sequence PYANGSIHIGH. L-isoleucyl-5'-AMP is bound at residue Glu563. The 'KMSKS' region motif lies at 604–608; sequence KMSKS. An ATP-binding site is contributed by Lys607. Cys907, Cys910, Cys927, and Cys930 together coordinate Zn(2+).

Belongs to the class-I aminoacyl-tRNA synthetase family. IleS type 1 subfamily. In terms of assembly, monomer. Requires Zn(2+) as cofactor.

It localises to the cytoplasm. It catalyses the reaction tRNA(Ile) + L-isoleucine + ATP = L-isoleucyl-tRNA(Ile) + AMP + diphosphate. In terms of biological role, catalyzes the attachment of isoleucine to tRNA(Ile). As IleRS can inadvertently accommodate and process structurally similar amino acids such as valine, to avoid such errors it has two additional distinct tRNA(Ile)-dependent editing activities. One activity is designated as 'pretransfer' editing and involves the hydrolysis of activated Val-AMP. The other activity is designated 'posttransfer' editing and involves deacylation of mischarged Val-tRNA(Ile). This is Isoleucine--tRNA ligase from Salmonella typhimurium (strain LT2 / SGSC1412 / ATCC 700720).